Reading from the N-terminus, the 329-residue chain is Octaprenyl diphosphate synthase (329 aa).

Isopentenyl diphosphate contacts are provided by lysine 51, arginine 54, and histidine 83. Mg(2+) contacts are provided by aspartate 90 and aspartate 94. Residue arginine 99 coordinates an all-trans-polyprenyl diphosphate. Arginine 100 lines the isopentenyl diphosphate pocket. An all-trans-polyprenyl diphosphate-binding residues include lysine 176, threonine 177, and glutamine 214.

It belongs to the FPP/GGPP synthase family. The cofactor is Mg(2+).

It catalyses the reaction 5 isopentenyl diphosphate + (2E,6E)-farnesyl diphosphate = all-trans-octaprenyl diphosphate + 5 diphosphate. Functionally, supplies octaprenyl diphosphate, the precursor for the side chain of the isoprenoid quinones ubiquinone and menaquinone. The protein is Octaprenyl diphosphate synthase (ispB) of Haemophilus influenzae (strain ATCC 51907 / DSM 11121 / KW20 / Rd).